A 278-amino-acid polypeptide reads, in one-letter code: 4-deoxy-L-threo-5-hexosulose-uronate ketol-isomerase (278 aa).

4 residues coordinate Zn(2+): His-196, His-198, Glu-203, and His-245.

It belongs to the KduI family. Requires Zn(2+) as cofactor.

The catalysed reaction is 5-dehydro-4-deoxy-D-glucuronate = 3-deoxy-D-glycero-2,5-hexodiulosonate. Its pathway is glycan metabolism; pectin degradation; 2-dehydro-3-deoxy-D-gluconate from pectin: step 4/5. In terms of biological role, catalyzes the isomerization of 5-dehydro-4-deoxy-D-glucuronate to 3-deoxy-D-glycero-2,5-hexodiulosonate. The chain is 4-deoxy-L-threo-5-hexosulose-uronate ketol-isomerase from Shigella flexneri.